The chain runs to 188 residues: Elongation factor P (188 aa).

The protein belongs to the elongation factor P family.

The protein resides in the cytoplasm. It participates in protein biosynthesis; polypeptide chain elongation. Functionally, involved in peptide bond synthesis. Stimulates efficient translation and peptide-bond synthesis on native or reconstituted 70S ribosomes in vitro. Probably functions indirectly by altering the affinity of the ribosome for aminoacyl-tRNA, thus increasing their reactivity as acceptors for peptidyl transferase. This chain is Elongation factor P, found in Caulobacter vibrioides (strain ATCC 19089 / CIP 103742 / CB 15) (Caulobacter crescentus).